The primary structure comprises 366 residues: Cytochrome c peroxidase, mitochondrial (366 aa).

Residue His123 is the Proton acceptor of the active site. Positions 195-206 (IEWRPGRVDDNT) are enriched in basic and acidic residues. Residues 195-218 (IEWRPGRVDDNTASKVPPNGRLPD) are disordered. His247 serves as a coordination point for heme b. The Tryptophan radical intermediate role is filled by Trp263.

It belongs to the peroxidase family. Cytochrome c peroxidase subfamily. As to quaternary structure, forms a one-to-one complex with cytochrome c. It depends on heme b as a cofactor.

It is found in the mitochondrion matrix. The protein localises to the mitochondrion intermembrane space. It catalyses the reaction 2 Fe(II)-[cytochrome c] + H2O2 + 2 H(+) = 2 Fe(III)-[cytochrome c] + 2 H2O. Destroys radicals which are normally produced within the cells and which are toxic to biological systems. The sequence is that of Cytochrome c peroxidase, mitochondrial (CCP1) from Candida albicans (strain SC5314 / ATCC MYA-2876) (Yeast).